Reading from the N-terminus, the 379-residue chain is Sulfate adenylyltransferase (379 aa).

Belongs to the sulfate adenylyltransferase family.

It catalyses the reaction sulfate + ATP + H(+) = adenosine 5'-phosphosulfate + diphosphate. It functions in the pathway sulfur metabolism; hydrogen sulfide biosynthesis; sulfite from sulfate: step 1/3. This Cenarchaeum symbiosum (strain A) protein is Sulfate adenylyltransferase.